A 544-amino-acid chain; its full sequence is Transcription factor bHLH119 (544 aa).

2 disordered regions span residues 12–59 and 185–208; these read NGQV…QPPR and VAST…PPSV. Over residues 15 to 29 the composition is skewed to polar residues; it reads VVRTSQPQRPSSGKP. Residues 50 to 59 are compositionally biased toward pro residues; that stretch reads LPLPLLQPPR. Thr269 bears the Phosphothreonine mark. Position 274 is a phosphoserine (Ser274). Disordered regions lie at residues 342–364 and 522–544; these read QGTE…MHNL and QPPL…STSK. One can recognise a bHLH domain in the interval 357–406; sequence RAADMHNLSERRRRERINERMKTLQELLPRCRKTDKVSMLEDVIEYVKSL. Over residues 522-535 the composition is skewed to low complexity; that stretch reads QPPLPLQGQPTSQP. 2 positions are modified to phosphoserine: Ser541 and Ser543.

Homodimer.

The protein resides in the nucleus. The polypeptide is Transcription factor bHLH119 (BHLH119) (Arabidopsis thaliana (Mouse-ear cress)).